Reading from the N-terminus, the 370-residue chain is 4-hydroxy-3-methylbut-2-en-1-yl diphosphate synthase (flavodoxin) (370 aa).

Residues cysteine 270, cysteine 273, cysteine 305, and glutamate 312 each contribute to the [4Fe-4S] cluster site.

Belongs to the IspG family. [4Fe-4S] cluster serves as cofactor.

The enzyme catalyses (2E)-4-hydroxy-3-methylbut-2-enyl diphosphate + oxidized [flavodoxin] + H2O + 2 H(+) = 2-C-methyl-D-erythritol 2,4-cyclic diphosphate + reduced [flavodoxin]. Its pathway is isoprenoid biosynthesis; isopentenyl diphosphate biosynthesis via DXP pathway; isopentenyl diphosphate from 1-deoxy-D-xylulose 5-phosphate: step 5/6. Converts 2C-methyl-D-erythritol 2,4-cyclodiphosphate (ME-2,4cPP) into 1-hydroxy-2-methyl-2-(E)-butenyl 4-diphosphate. In Ectopseudomonas mendocina (strain ymp) (Pseudomonas mendocina), this protein is 4-hydroxy-3-methylbut-2-en-1-yl diphosphate synthase (flavodoxin).